The following is a 369-amino-acid chain: Chorismate synthase (369 aa).

2 residues coordinate NADP(+): Arg-48 and Arg-54. FMN is bound by residues 125-127, 238-239, Gly-278, 293-297, and Arg-319; these read RSS, NA, and KPTSS.

It belongs to the chorismate synthase family. In terms of assembly, homotetramer. It depends on FMNH2 as a cofactor.

It carries out the reaction 5-O-(1-carboxyvinyl)-3-phosphoshikimate = chorismate + phosphate. The protein operates within metabolic intermediate biosynthesis; chorismate biosynthesis; chorismate from D-erythrose 4-phosphate and phosphoenolpyruvate: step 7/7. Catalyzes the anti-1,4-elimination of the C-3 phosphate and the C-6 proR hydrogen from 5-enolpyruvylshikimate-3-phosphate (EPSP) to yield chorismate, which is the branch point compound that serves as the starting substrate for the three terminal pathways of aromatic amino acid biosynthesis. This reaction introduces a second double bond into the aromatic ring system. This chain is Chorismate synthase, found in Nitrosococcus oceani (strain ATCC 19707 / BCRC 17464 / JCM 30415 / NCIMB 11848 / C-107).